A 499-amino-acid chain; its full sequence is Terminase, large subunit (499 aa).

Residues Met-1–Phe-58 form an interaction with the terminase small subunit region. The tract at residues Met-1 to Gly-286 is ATPase activity. The Walker A motif motif lies at Ala-60–Ser-67. The Walker B motif signature appears at Gly-199–Glu-204. The active-site For ATPase activity is Glu-204. The tract at residues Asp-312–Lys-482 is nuclease activity. Mg(2+) is bound by residues Asp-321 and Asp-459.

This sequence belongs to the Lederbergvirus large terminase family. Interacts with the terminase small subunit; the active complex is composed of dimer of terminase large subunits and a nonamer ring of terminase small subunits. Interacts with the portal protein; this interaction allows the packaging of viral DNA. It depends on Mg(2+) as a cofactor.

The terminase large subunit acts as an ATP driven molecular motor necessary for viral DNA translocation into empty capsids and as an endonuclease that cuts the viral genome to initiate and to end a packaging reaction. The terminase lies at a unique vertex of the procapsid and is composed of two subunits, a small terminase subunit involved in viral DNA recognition (packaging 'pac' sequence), and a large terminase subunit possessing endonucleolytic and ATPase activities. Both terminase subunits heterooligomerize and are docked on the portal protein to form the packaging machine. Once the capsid is packaged with the DNA (headful packaging), the terminase cleaves the viral genome concatemer and is substituted by the tail. The sequence is that of Terminase, large subunit (2) from Salmonella phage P22 (Bacteriophage P22).